A 404-amino-acid chain; its full sequence is L-cysteine:1D-myo-inositol 2-amino-2-deoxy-alpha-D-glucopyranoside ligase 1 (404 aa).

Cys-47 serves as a coordination point for Zn(2+). L-cysteinyl-5'-AMP is bound by residues 47-50 (CGIT), Thr-62, and 85-87 (NIT). The 'HIGH' region motif lies at 49–59 (ITPYDSTHLGH). Positions 188–193 (ERGGDP) match the 'ERGGDP' region motif. L-cysteinyl-5'-AMP is bound at residue Trp-228. Position 232 (Cys-232) interacts with Zn(2+). An L-cysteinyl-5'-AMP-binding site is contributed by 250–252 (GSD). A Zn(2+)-binding site is contributed by His-257. Residue Ile-284 coordinates L-cysteinyl-5'-AMP. The short motif at 290–294 (KMSKS) is the 'KMSKS' region element.

It belongs to the class-I aminoacyl-tRNA synthetase family. MshC subfamily. In terms of assembly, monomer. Zn(2+) is required as a cofactor.

It catalyses the reaction 1D-myo-inositol 2-amino-2-deoxy-alpha-D-glucopyranoside + L-cysteine + ATP = 1D-myo-inositol 2-(L-cysteinylamino)-2-deoxy-alpha-D-glucopyranoside + AMP + diphosphate + H(+). Catalyzes the ATP-dependent condensation of GlcN-Ins and L-cysteine to form L-Cys-GlcN-Ins. This is L-cysteine:1D-myo-inositol 2-amino-2-deoxy-alpha-D-glucopyranoside ligase 1 from Corynebacterium jeikeium (strain K411).